The chain runs to 280 residues: Shikimate dehydrogenase (NADP(+)) (280 aa).

Residues 15–17 (SLS) and Thr-62 each bind shikimate. Catalysis depends on Lys-66, which acts as the Proton acceptor. Positions 88 and 104 each coordinate shikimate. Residues 128–132 (GAGGA), 151–156 (NRTEER), and Ile-222 each bind NADP(+). Shikimate is bound at residue Tyr-224. Residue Gly-245 participates in NADP(+) binding.

The protein belongs to the shikimate dehydrogenase family. In terms of assembly, homodimer.

The catalysed reaction is shikimate + NADP(+) = 3-dehydroshikimate + NADPH + H(+). It participates in metabolic intermediate biosynthesis; chorismate biosynthesis; chorismate from D-erythrose 4-phosphate and phosphoenolpyruvate: step 4/7. Functionally, involved in the biosynthesis of the chorismate, which leads to the biosynthesis of aromatic amino acids. Catalyzes the reversible NADPH linked reduction of 3-dehydroshikimate (DHSA) to yield shikimate (SA). This Methanosarcina acetivorans (strain ATCC 35395 / DSM 2834 / JCM 12185 / C2A) protein is Shikimate dehydrogenase (NADP(+)).